The sequence spans 598 residues: Aluminum-activated malate transporter 9 (598 aa).

6 consecutive transmembrane segments (helical) span residues 88 to 108 (IVFS…IFYQ), 117 to 137 (YSVW…GATL), 144 to 164 (ALGT…STLF), 170 to 190 (IFCT…KLYP), 194 to 214 (AYEY…ISGF), and 227 to 247 (FLLI…IYPI).

This sequence belongs to the aromatic acid exporter (TC 2.A.85) family. Expressed in hypocotyls, leaves, roots, flowers, sepals and stamina. In leaves, expressed almost exclusively in mesophyll cells.

The protein resides in the vacuole membrane. Its activity is regulated as follows. Slow activation by external aluminum. In terms of biological role, vacuolar malate channel. Has a higher selectivity for malate than for fumarate. Also exhibits a weak chloride conductance. The chain is Aluminum-activated malate transporter 9 (ALMT9) from Arabidopsis thaliana (Mouse-ear cress).